The following is a 238-amino-acid chain: tRNA (guanine-N(7)-)-methyltransferase (238 aa).

4 residues coordinate S-adenosyl-L-methionine: Glu68, Glu93, Asp120, and Asp143. Residue Asp143 is part of the active site. Substrate contacts are provided by residues Lys147, Asp179, and 216 to 219 (TKFE).

Belongs to the class I-like SAM-binding methyltransferase superfamily. TrmB family.

It catalyses the reaction guanosine(46) in tRNA + S-adenosyl-L-methionine = N(7)-methylguanosine(46) in tRNA + S-adenosyl-L-homocysteine. Its pathway is tRNA modification; N(7)-methylguanine-tRNA biosynthesis. In terms of biological role, catalyzes the formation of N(7)-methylguanine at position 46 (m7G46) in tRNA. This is tRNA (guanine-N(7)-)-methyltransferase from Shewanella oneidensis (strain ATCC 700550 / JCM 31522 / CIP 106686 / LMG 19005 / NCIMB 14063 / MR-1).